The primary structure comprises 141 residues: Hemoglobin subunit alpha-1/2 (141 aa).

Residues 1-141 (VLSPADKTNV…VSTVLTSKYR (141 aa)) enclose the Globin domain. Ser-3 carries the phosphoserine modification. Lys-7 carries the N6-succinyllysine modification. Residue Thr-8 is modified to Phosphothreonine. Residue Lys-11 is modified to N6-succinyllysine. At Lys-16 the chain carries N6-acetyllysine; alternate. An N6-succinyllysine; alternate modification is found at Lys-16. Tyr-24 is modified (phosphotyrosine). A Phosphoserine modification is found at Ser-35. Lys-40 is modified (N6-succinyllysine). Ser-49 is subject to Phosphoserine. His-58 is a binding site for O2. His-87 serves as a coordination point for heme b. Residue Ser-102 is modified to Phosphoserine. Thr-108 bears the Phosphothreonine mark. Ser-124 and Ser-131 each carry phosphoserine. Residues Thr-134 and Thr-137 each carry the phosphothreonine modification. A Phosphoserine modification is found at Ser-138.

This sequence belongs to the globin family. Heterotetramer of two alpha chains and two beta chains. Red blood cells.

In terms of biological role, involved in oxygen transport from the lung to the various peripheral tissues. The polypeptide is Hemoglobin subunit alpha-1/2 (Macaca speciosa (Stump-tail macaque)).